The chain runs to 366 residues: MLQIFIAGAVAFLVSVFLTPVLIRWFSAEGLGQEIREEGPKSHFKKRGTPTMGGIAVLAGIVFGYLIAVLVGLVTTGAGPGVSGWLVLGLTLALGGLGFADDYIKLVKGRNLGLNAKAKLVGQLVTAIVFGLLILQFPNAHGLTPGSTHLSFVRDIATFDIAIGPAIVGMILFLIFIYLVISAWSNAVNLTDGLDGLASGVTAIVMGTYVLITFWQFRNSCAVSAQAACYAVRDPLDLSMLASAGLGACLGFLWWNAAPAKIFMGDTGSLALGGLVAGLSVTTQTELLMILVGIIFVIEAASVVIQVVSFKATGKRVFRMAPIHHHFENKGWAETTVVIRFWLLAALAAMSGFAVFYAEWLNGASF.

The next 10 helical transmembrane spans lie at 3–23 (QIFI…PVLI), 54–74 (GIAV…VGLV), 80–100 (PGVS…LGFA), 120–140 (LVGQ…FPNA), 161–181 (IAIG…YLVI), 197–217 (LASG…FWQF), 238–258 (LSML…WNAA), 262–282 (IFMG…LSVT), 288–308 (LMIL…IQVV), and 341–361 (FWLL…AEWL).

This sequence belongs to the glycosyltransferase 4 family. MraY subfamily. Mg(2+) is required as a cofactor.

It localises to the cell membrane. The enzyme catalyses UDP-N-acetyl-alpha-D-muramoyl-L-alanyl-gamma-D-glutamyl-meso-2,6-diaminopimeloyl-D-alanyl-D-alanine + di-trans,octa-cis-undecaprenyl phosphate = di-trans,octa-cis-undecaprenyl diphospho-N-acetyl-alpha-D-muramoyl-L-alanyl-D-glutamyl-meso-2,6-diaminopimeloyl-D-alanyl-D-alanine + UMP. Its pathway is cell wall biogenesis; peptidoglycan biosynthesis. Functionally, catalyzes the initial step of the lipid cycle reactions in the biosynthesis of the cell wall peptidoglycan: transfers peptidoglycan precursor phospho-MurNAc-pentapeptide from UDP-MurNAc-pentapeptide onto the lipid carrier undecaprenyl phosphate, yielding undecaprenyl-pyrophosphoryl-MurNAc-pentapeptide, known as lipid I. This is Phospho-N-acetylmuramoyl-pentapeptide-transferase from Corynebacterium jeikeium (strain K411).